Consider the following 179-residue polypeptide: Nucleoside diphosphate kinase 6 (179 aa).

Residues K18, F67, R95, T101, R115, and N125 each coordinate ATP. The active-site Pros-phosphohistidine intermediate is the H128.

This sequence belongs to the NDK family. It depends on Mg(2+) as a cofactor.

It carries out the reaction a 2'-deoxyribonucleoside 5'-diphosphate + ATP = a 2'-deoxyribonucleoside 5'-triphosphate + ADP. The enzyme catalyses a ribonucleoside 5'-diphosphate + ATP = a ribonucleoside 5'-triphosphate + ADP. In terms of biological role, major role in the synthesis of nucleoside triphosphates other than ATP. The ATP gamma phosphate is transferred to the NDP beta phosphate via a ping-pong mechanism, using a phosphorylated active-site intermediate. This chain is Nucleoside diphosphate kinase 6 (nme6), found in Xenopus tropicalis (Western clawed frog).